Here is a 294-residue protein sequence, read N- to C-terminus: F-box protein SKIP3 (294 aa).

The 47-residue stretch at 21-67 (SSTLDSLPEGCISNIISFTSPEDACVAAAVSKIFESAVKSDIVWEKF) folds into the F-box domain.

Part of a SCF (SKP1-cullin-F-box) protein ligase complex. Interacts with SKP1A/ASK1.

Its pathway is protein modification; protein ubiquitination. The sequence is that of F-box protein SKIP3 (SKIP3) from Arabidopsis thaliana (Mouse-ear cress).